Reading from the N-terminus, the 112-residue chain is Phosphoribosyl-ATP pyrophosphatase (112 aa).

The protein belongs to the PRA-PH family.

The protein localises to the cytoplasm. It carries out the reaction 1-(5-phospho-beta-D-ribosyl)-ATP + H2O = 1-(5-phospho-beta-D-ribosyl)-5'-AMP + diphosphate + H(+). Its pathway is amino-acid biosynthesis; L-histidine biosynthesis; L-histidine from 5-phospho-alpha-D-ribose 1-diphosphate: step 2/9. The sequence is that of Phosphoribosyl-ATP pyrophosphatase from Chromohalobacter salexigens (strain ATCC BAA-138 / DSM 3043 / CIP 106854 / NCIMB 13768 / 1H11).